Consider the following 452-residue polypeptide: Chaperone SurA (452 aa).

The first 28 residues, 1 to 28, serve as a signal peptide directing secretion; it reads MKKTLRFAAVVSSLAAASALLAAAPAAA. PpiC domains follow at residues 186–288 and 302–400; these read QQDL…RLVD and IVQT…QVLS.

It is found in the periplasm. The catalysed reaction is [protein]-peptidylproline (omega=180) = [protein]-peptidylproline (omega=0). Chaperone involved in the correct folding and assembly of outer membrane proteins. Recognizes specific patterns of aromatic residues and the orientation of their side chains, which are found more frequently in integral outer membrane proteins. May act in both early periplasmic and late outer membrane-associated steps of protein maturation. This is Chaperone SurA from Burkholderia lata (strain ATCC 17760 / DSM 23089 / LMG 22485 / NCIMB 9086 / R18194 / 383).